Here is a 121-residue protein sequence, read N- to C-terminus: Small ribosomal subunit protein uS13 (121 aa).

Positions P96–K121 are disordered. Over residues A106 to K121 the composition is skewed to basic residues.

The protein belongs to the universal ribosomal protein uS13 family. Part of the 30S ribosomal subunit. Forms a loose heterodimer with protein S19. Forms two bridges to the 50S subunit in the 70S ribosome.

Its function is as follows. Located at the top of the head of the 30S subunit, it contacts several helices of the 16S rRNA. In the 70S ribosome it contacts the 23S rRNA (bridge B1a) and protein L5 of the 50S subunit (bridge B1b), connecting the 2 subunits; these bridges are implicated in subunit movement. Contacts the tRNAs in the A and P-sites. In Streptococcus pneumoniae serotype 4 (strain ATCC BAA-334 / TIGR4), this protein is Small ribosomal subunit protein uS13.